Here is a 192-residue protein sequence, read N- to C-terminus: Nucleoside triphosphate pyrophosphatase (192 aa).

Asp73 acts as the Proton acceptor in catalysis.

It belongs to the Maf family. A divalent metal cation serves as cofactor.

It localises to the cytoplasm. It catalyses the reaction a ribonucleoside 5'-triphosphate + H2O = a ribonucleoside 5'-phosphate + diphosphate + H(+). The enzyme catalyses a 2'-deoxyribonucleoside 5'-triphosphate + H2O = a 2'-deoxyribonucleoside 5'-phosphate + diphosphate + H(+). Nucleoside triphosphate pyrophosphatase. May have a dual role in cell division arrest and in preventing the incorporation of modified nucleotides into cellular nucleic acids. The sequence is that of Nucleoside triphosphate pyrophosphatase from Ehrlichia ruminantium (strain Gardel).